We begin with the raw amino-acid sequence, 413 residues long: Protein cycle (413 aa).

A disordered region spans residues 1–43 (MEVQEFCENMEEIEDENYDEEKSARTSDENRKQNHSEIEKRRR). Residues 8–19 (ENMEEIEDENYD) are compositionally biased toward acidic residues. Positions 20 to 41 (EEKSARTSDENRKQNHSEIEKR) are enriched in basic and acidic residues. The bHLH domain maps to 30-83 (NRKQNHSEIEKRRRDKMNTYINELSSMIPMCFAMQRKLDKLTVLRMAVQHLRGI). The 72-residue stretch at 104–175 (DQELKMIILQ…EQLSSLEQCP (72 aa)) folds into the PAS 1 domain. The segment at 219 to 242 (NQIKEESDTSSSSRSSTKRKSRLT) is disordered. The region spanning 297-367 (PASLDNHPNI…ESHKMVMQVP (71 aa)) is the PAS 2 domain. The PAC domain occupies 372-413 (TQVYRFRCKDNSYIQLQSEWRAFKNPWTSEIDYIIAKNSVFL).

As to quaternary structure, efficient DNA binding requires dimerization with another bHLH protein. Forms a heterodimer with Clock in order to activate PER and TIM transcription. As to expression, expressed in head and ovary.

Its subcellular location is the nucleus. Its function is as follows. Putative transcription factor involved in the generation of biological rhythms. Activates cycling transcription of Period (PER) and Timeless (TIM) by binding to the E-box (5'-CACGTG-3') present in their promoters. This is Protein cycle (cyc) from Drosophila melanogaster (Fruit fly).